Reading from the N-terminus, the 240-residue chain is Ribonuclease 3 (240 aa).

The RNase III domain occupies V10 to G136. Position 49 (E49) interacts with Mg(2+). D53 is an active-site residue. Residues D122 and E125 each coordinate Mg(2+). Residue E125 is part of the active site. Positions D163–A231 constitute a DRBM domain. The interval T205–S240 is disordered. Low complexity predominate over residues Q219–A228.

This sequence belongs to the ribonuclease III family. In terms of assembly, homodimer. Requires Mg(2+) as cofactor.

It is found in the cytoplasm. The enzyme catalyses Endonucleolytic cleavage to 5'-phosphomonoester.. Functionally, digests double-stranded RNA. Involved in the processing of primary rRNA transcript to yield the immediate precursors to the large and small rRNAs (23S and 16S). Processes some mRNAs, and tRNAs when they are encoded in the rRNA operon. Processes pre-crRNA and tracrRNA of type II CRISPR loci if present in the organism. The chain is Ribonuclease 3 from Thermobifida fusca (strain YX).